The sequence spans 134 residues: ATP synthase epsilon chain, plastid (134 aa).

This sequence belongs to the ATPase epsilon chain family. In terms of assembly, F-type ATPases have 2 components, CF(1) - the catalytic core - and CF(0) - the membrane proton channel. CF(1) has five subunits: alpha(3), beta(3), gamma(1), delta(1), epsilon(1). CF(0) has three main subunits: a, b and c.

The protein resides in the plastid membrane. Its function is as follows. Produces ATP from ADP in the presence of a proton gradient across the membrane. This is ATP synthase epsilon chain, plastid from Prototheca wickerhamii.